The chain runs to 524 residues: Probable beta-1,4-xylosyltransferase IRX14 (524 aa).

The Cytoplasmic segment spans residues 1–51; that stretch reads MMKSLLPQSQLRRSAAAASAARSSGGGAGSGGADGAGSDGGAGGRAPATST. The segment at 21-41 is disordered; the sequence is ARSSGGGAGSGGADGAGSDGG. Residues 24 to 41 are compositionally biased toward gly residues; sequence SGGGAGSGGADGAGSDGG. A helical; Signal-anchor for type II membrane protein membrane pass occupies residues 52–71; it reads FWFLLHALCCLVSLFLGFRF. Residues 72–524 are Lumenal-facing; that stretch reads SRLLFFLLFS…SRSTTKRKEN (453 aa). Residues Asn-132, Asn-135, Asn-240, and Asn-353 are each glycosylated (N-linked (GlcNAc...) asparagine). A disordered region spans residues 492–524; that stretch reads AELVDSKQDQEGRRLSRTDRSSRSRSTTKRKEN. Residues 495 to 513 are compositionally biased toward basic and acidic residues; it reads VDSKQDQEGRRLSRTDRSS.

The protein belongs to the glycosyltransferase 43 family.

The protein resides in the golgi apparatus membrane. Probable beta-1,4-xylosyltransferase involved in xylan biosynthesis in cell walls. The protein is Probable beta-1,4-xylosyltransferase IRX14 of Oryza sativa subsp. japonica (Rice).